Consider the following 214-residue polypeptide: ATP-dependent Clp protease proteolytic subunit 2 (214 aa).

The active-site Nucleophile is the Ser110. The active site involves His135.

It belongs to the peptidase S14 family. Fourteen ClpP subunits assemble into 2 heptameric rings which stack back to back to give a disk-like structure with a central cavity, resembling the structure of eukaryotic proteasomes.

Its subcellular location is the cytoplasm. It catalyses the reaction Hydrolysis of proteins to small peptides in the presence of ATP and magnesium. alpha-casein is the usual test substrate. In the absence of ATP, only oligopeptides shorter than five residues are hydrolyzed (such as succinyl-Leu-Tyr-|-NHMec, and Leu-Tyr-Leu-|-Tyr-Trp, in which cleavage of the -Tyr-|-Leu- and -Tyr-|-Trp bonds also occurs).. Functionally, cleaves peptides in various proteins in a process that requires ATP hydrolysis. Has a chymotrypsin-like activity. Plays a major role in the degradation of misfolded proteins. This Mycobacterium bovis (strain ATCC BAA-935 / AF2122/97) protein is ATP-dependent Clp protease proteolytic subunit 2.